We begin with the raw amino-acid sequence, 249 residues long: Mediator of RNA polymerase II transcription subunit 6 (249 aa).

Positions 156-173 (SDRSKSDKKDANSAKDEN) are enriched in basic and acidic residues. 2 disordered regions span residues 156-177 (SDRSKSDKKDANSAKDENSGTL) and 198-249 (IPPM…KKSK). Residues 217-228 (TARNASEMNNAT) show a composition bias toward polar residues. Basic and acidic residues predominate over residues 233–249 (IKTEGVDMKPPPEKKSK).

This sequence belongs to the Mediator complex subunit 6 family. As to quaternary structure, component of the Mediator complex, which includes at least MED4, MED6, MED14, MED17, MED18, MED20, MED21, MED23, MED24, MED27, MED30 and MED31.

The protein localises to the nucleus. In terms of biological role, component of the Mediator complex, a coactivator involved in the regulated transcription of nearly all RNA polymerase II-dependent genes. Mediator functions as a bridge to convey information from gene-specific regulatory proteins to the basal RNA polymerase II transcription machinery. Mediator is recruited to promoters by direct interactions with regulatory proteins and serves as a scaffold for the assembly of a functional preinitiation complex with RNA polymerase II and the general transcription factors. Required for activated transcription of the MtnA, MtnB and MtnD genes. The chain is Mediator of RNA polymerase II transcription subunit 6 (MED6) from Drosophila melanogaster (Fruit fly).